Here is a 587-residue protein sequence, read N- to C-terminus: MTHAPTPPAASNFLRPIIEDDLQANRFQGKLWAGKPGPAALQAQGQPDPARIRTRFPPEPNGYLHIGHAKSICVNFGLARDYGGVCHLRFDDTNPEKEEQEYVDAIIEAVHWLGFDWQADGNDNLYFASDYFEFMYEFAEALVQAGHAYVDEQSAEEIRASRGTLTEPGTDSPWRDRPADESLLRLREMRDGKHPDGSLVLRARIDMASPNINLRDPVMYRVRHATHHRTGNAWCIYPMYSWAHPVEDALEGITHSICTLEFEDQRPFYDWILARLAELGKLARPLPHQYEFARLNLTYVVTSKRKLLQLVREGYVDGWDDPRMPTLFGLRRRGYTPSSIRLFCDRTAVSKSDSRIDYSLLEQAVRDDLDPVAPRSVAVLDPLKLVITNHPEGRSETCSAPRNPHDPQAGVREFPFTRELWIEQDDFREEPPKKYFRLFPGNTVRLKYGYVVRCTGFTKDESGKVVEVQAEYLPDTKSGTPGADSVKVKGNITWVSAAHAVPAQVHLYDRLFADAHPDGGDKDFLACLNPNSKQTVQAWLEPGIEAVPGATWQFERLGYFTVDSKDSRPEAPVLNRIVTLRDSWQAA.

The short motif at 58 to 68 (PEPNGYLHIGH) is the 'HIGH' region element. ATP is bound by residues 59-61 (EPN) and 65-71 (HIGHAKS). L-glutamine-binding residues include Asp-91 and Tyr-240. ATP contacts are provided by residues Thr-259 and 294–295 (RL). The short motif at 301–305 (VTSKR) is the 'KMSKS' region element.

This sequence belongs to the class-I aminoacyl-tRNA synthetase family. Monomer.

The protein localises to the cytoplasm. The enzyme catalyses tRNA(Gln) + L-glutamine + ATP = L-glutaminyl-tRNA(Gln) + AMP + diphosphate. This chain is Glutamine--tRNA ligase, found in Bordetella parapertussis (strain 12822 / ATCC BAA-587 / NCTC 13253).